The chain runs to 1416 residues: DNA-directed RNA polymerase subunit beta' (1416 aa).

Positions 71, 73, 86, and 89 each coordinate Zn(2+). The Mg(2+) site is built by D461, D463, and D465. Zn(2+) is bound by residues C815, C892, C899, and C902.

The protein belongs to the RNA polymerase beta' chain family. As to quaternary structure, the RNAP catalytic core consists of 2 alpha, 1 beta, 1 beta' and 1 omega subunit. When a sigma factor is associated with the core the holoenzyme is formed, which can initiate transcription. Requires Mg(2+) as cofactor. The cofactor is Zn(2+).

The catalysed reaction is RNA(n) + a ribonucleoside 5'-triphosphate = RNA(n+1) + diphosphate. DNA-dependent RNA polymerase catalyzes the transcription of DNA into RNA using the four ribonucleoside triphosphates as substrates. The protein is DNA-directed RNA polymerase subunit beta' of Blochmanniella pennsylvanica (strain BPEN).